A 2611-amino-acid chain; its full sequence is Highly reducing polyketide synthase ATEG_07659 (2611 aa).

The region spanning 10-409 is the Ketosynthase family 3 (KS3) domain; sequence SEPIAIIGLS…GTNSHVIVEG (400 aa). Catalysis depends on for beta-ketoacyl synthase activity residues Cys-157, His-292, and His-330. The tract at residues 537 to 844 is malonyl-CoA:ACP transacylase (MAT) domain; the sequence is MVFTGQGAQW…VRFVEAFTDM (308 aa). The N-terminal hotdog fold stretch occupies residues 969–1109; that stretch reads HDLLGVLVPG…GLITVQMAAD (141 aa). A PKS/mFAS DH domain is found at 969–1292; that stretch reads HDLLGVLVPG…CQSLGRSAPG (324 aa). The tract at residues 970–1289 is dehydratase (DH) domain; that stretch reads DLLGVLVPGT…GLVCQSLGRS (320 aa). His-1001 serves as the catalytic Proton acceptor; for dehydratase activity. A C-terminal hotdog fold region spans residues 1128 to 1292; that stretch reads GYTRRIDPQD…CQSLGRSAPG (165 aa). The Proton donor; for dehydratase activity role is filled by Asp-1199. The segment at 1469 to 1602 is methyltransferase (CMet) domain; sequence FGQLKSLLAA…GATLLLMETT (134 aa). Positions 1898–2213 are enoyl reductase (ER) domain; that stretch reads GLLDTLAFGD…TGKHLGKLVL (316 aa). Positions 2236–2416 are ketoreductase (KR) domain; that stretch reads ASYLLVGGVG…AVSLDMGVIK (181 aa). Residues 2499-2509 are compositionally biased toward low complexity; that stretch reads SRAQAQQAGGD. The interval 2499–2520 is disordered; that stretch reads SRAQAQQAGGDSDSEPLSAKLR. The Carrier domain maps to 2527-2604; the sequence is AAARCVGDAI…ALALDVVAKS (78 aa). Ser-2564 is subject to O-(pantetheine 4'-phosphoryl)serine.

It functions in the pathway secondary metabolite biosynthesis. In terms of biological role, highly reducing polyketide synthase; part of the cluster B that mediates the biosynthesis of azasperpyranones, members of the azaphilone family that exhibit anti-cancer activities. Azasperpyranones are synthesized by 2 clusters, A and B. Cluster A is responsible for the production of the polyhydric phenol moiety while the azaphilonoid scaffold is produced by the cluster B. The non-reducing polyketide synthase ATEG_03629 produces 5-methyl orsellinic acid, which is then reduced to 5-methyl orsellinic aldehyde by the NRPS-like protein ATEG_03630. 5-methyl orsellinic aldehyde is then first hydroxylated by the FAD-dependent monooxygenase ATEG_03635 and subsequently hydroxylated by the cytochrome P450 monooxygenase ATEG_03631 to produce the unstable polyhydric phenol precursor of azasperpyranones. On the other hand, the polyketide synthase ATEG_07659 is responsible for producing the 3,5-dimethyloctadienone moiety from acetyl-CoA, three malonyl-CoA, and two S-adenosyl methionines (SAM). The 3,5-dimethyloctadienone moiety is then loaded onto the SAT domain of ATEG_07661 and extended with four malonyl-CoA and one SAM, which leads to the formation of 2,4-dihydroxy-6-(5,7-dimethyl-2-oxo-trans-3-trans-5-nonadienyl)-3-methylbenzaldehyde (compound 8) after reductive release and aldol condensation. The FAD-dependent monooxygenase ATEG_07662 is the next enzyme in the biosynthesis sequence and hydroxylates the side chain at the benzylic position of compound 8. In Aspergillus nidulans, afoF, the ortholog of the FAD-dependent oxygenase ATEG_07660, is the key enzyme for the biosynthesis of asperfuranone by catalyzing the hydroxylation at C-8 of to prevent the formation of a six-membered ring hemiacetal intermediate and thus facilitating the formation of a five-membered ring to produce asperfuranone. In Aspergillus terreus, ATEG_07660 is probably not functional, which leads to the formation of the six-membered ring hemiacetal intermediate presperpyranone instead of asperfuranone. Finally, ATEG_03636 is involved in the condensation of the polyhydric phenol moiety produced by cluster A and the perasperpyranone precursor produced by cluster B, to yield azasperpyranone A. Further modifications of azasperpyranone A result in the production of derivatives, including azasperpyranone B to F. This Aspergillus terreus (strain NIH 2624 / FGSC A1156) protein is Highly reducing polyketide synthase ATEG_07659.